The following is a 565-amino-acid chain: Frizzled-2 (565 aa).

A signal peptide spans 1-23; it reads MRPRSALPRLLLPLLLLPAAGPA. Residues 24-247 are Extracellular-facing; sequence QFHGEKGISI…QEETRFARLW (224 aa). In terms of domain architecture, FZ spans 34–153; sequence PDHGFCQPIS…HGAEQICVGQ (120 aa). 5 disulfide bridges follow: C39/C100, C47/C93, C84/C121, C110/C150, and C114/C138. A glycan (N-linked (GlcNAc...) asparagine) is linked at N53. An N-linked (GlcNAc...) asparagine glycan is attached at N154. Positions 160 to 189 are disordered; it reads APALLTTAPPPGLQPGAGGTPGGPGGGGAP. The span at 174-188 shows a compositional bias: gly residues; it reads PGAGGTPGGPGGGGA. The helical transmembrane segment at 248–268 threads the bilayer; the sequence is ILTWSVLCCASTFFTVTTYLV. Topologically, residues 269–279 are cytoplasmic; sequence DMQRFRYPERP. A helical transmembrane segment spans residues 280–300; it reads IIFLSGCYTMVSVAYIAGFVL. Residues 301–327 lie on the Extracellular side of the membrane; the sequence is QERVVCNERFSEDGYRTVVQGTKKEGC. Residues 328–348 traverse the membrane as a helical segment; the sequence is TILFMMLYFFSMASSIWWVIL. At 349–370 the chain is on the cytoplasmic side; that stretch reads SLTWFLAAGMKWGHEAIEANSQ. A helical transmembrane segment spans residues 371–391; the sequence is YFHLAAWAVPAVKTITILAMG. The Extracellular segment spans residues 392-414; that stretch reads QIDGDLLSGVCFVGLNSLDPLRG. A helical transmembrane segment spans residues 415 to 435; sequence FVLAPLFVYLFIGTSFLLAGF. The Cytoplasmic segment spans residues 436–461; sequence VSLFRIRTIMKHDGTKTEKLERLMVR. A helical transmembrane segment spans residues 462-482; that stretch reads IGVFSVLYTVPATIVIACYFY. Over 483-519 the chain is Extracellular; that stretch reads EQAFREHWERSWVSQHCKSLAIPCPAHYTPRMSPDFT. A helical membrane pass occupies residues 520-540; it reads VYMIKYLMTLIVGITSGFWIW. The Cytoplasmic segment spans residues 541 to 565; it reads SGKTLHSWRKFYTRLTNSRHGETTV. The Lys-Thr-X-X-X-Trp motif, mediates interaction with the PDZ domain of Dvl family members motif lies at 543–548; it reads KTLHSW. A PDZ-binding motif is present at residues 563-565; the sequence is TTV.

This sequence belongs to the G-protein coupled receptor Fz/Smo family. In terms of assembly, (Microbial infection) Interacts with C.difficile toxin TcdB; frizzled receptors constitute the major host receptors for TcdB in the colonic epithelium. Post-translationally, ubiquitinated by ZNRF3, leading to its degradation by the proteasome. Widely expressed. In the adult, mainly found in heart, placenta, skeletal muscle, lung, kidney, pancreas, prostate, testis, ovary and colon. In the fetus, expressed in brain, lung and kidney. Low levels in fetal liver.

It localises to the membrane. Its subcellular location is the cell membrane. In terms of biological role, receptor for Wnt proteins. Most of frizzled receptors are coupled to the beta-catenin canonical signaling pathway, which leads to the activation of disheveled proteins, inhibition of GSK-3 kinase, nuclear accumulation of beta-catenin and activation of Wnt target genes. A second signaling pathway involving PKC and calcium fluxes has been seen for some family members, but it is not yet clear if it represents a distinct pathway or if it can be integrated in the canonical pathway, as PKC seems to be required for Wnt-mediated inactivation of GSK-3 kinase. Both pathways seem to involve interactions with G-proteins. May be involved in transduction and intercellular transmission of polarity information during tissue morphogenesis and/or in differentiated tissues. (Microbial infection) Acts as a receptor for C.difficile toxin TcdB in the colonic epithelium. TcdB occupies the binding site for Wnt-adducted palmitoleate in frizzled receptors and TcdB-binding prevents Wnt-binding and downstream Wnt signaling. The chain is Frizzled-2 (FZD2) from Homo sapiens (Human).